The chain runs to 278 residues: 2-dehydro-3-deoxyphosphooctonate aldolase (278 aa).

Belongs to the KdsA family.

It localises to the cytoplasm. It carries out the reaction D-arabinose 5-phosphate + phosphoenolpyruvate + H2O = 3-deoxy-alpha-D-manno-2-octulosonate-8-phosphate + phosphate. Its pathway is carbohydrate biosynthesis; 3-deoxy-D-manno-octulosonate biosynthesis; 3-deoxy-D-manno-octulosonate from D-ribulose 5-phosphate: step 2/3. The protein operates within bacterial outer membrane biogenesis; lipopolysaccharide biosynthesis. This is 2-dehydro-3-deoxyphosphooctonate aldolase from Bartonella quintana (strain Toulouse) (Rochalimaea quintana).